Consider the following 276-residue polypeptide: Exosome complex component Rrp42 (276 aa).

Belongs to the RNase PH family. Rrp42 subfamily. Component of the archaeal exosome complex. Forms a hexameric ring-like arrangement composed of 3 Rrp41-Rrp42 heterodimers. The hexameric ring associates with a trimer of Rrp4 and/or Csl4 subunits.

Its subcellular location is the cytoplasm. Its function is as follows. Non-catalytic component of the exosome, which is a complex involved in RNA degradation. Contributes to the structuring of the Rrp41 active site. The chain is Exosome complex component Rrp42 from Aeropyrum pernix (strain ATCC 700893 / DSM 11879 / JCM 9820 / NBRC 100138 / K1).